A 580-amino-acid chain; its full sequence is Glypican-3 (580 aa).

The N-terminal stretch at 1-24 is a signal peptide; it reads MAGTVRTACLVVAMLLSLDFPGQA. Q25 is subject to Pyrrolidone carboxylic acid. Disulfide bonds link C35/C72, C65/C262, C73/C265, C197/C349, C252/C285, C274/C422, and C278/C410. N124 and N241 each carry an N-linked (GlcNAc...) asparagine glycan. Residue S352 is modified to Phosphoserine; by FAM20C. N-linked (GlcNAc...) asparagine glycosylation occurs at N418. O-linked (Xyl...) (glycosaminoglycan) serine glycosylation is found at S495 and S509. Residue N554 is the site of GPI-anchor amidated asparagine attachment. A propeptide spans 555-580 (removed in mature form); sequence LGNVHSPLKLLTSMAISVVCFFFLVH.

This sequence belongs to the glypican family. Heterodimer; disulfide-linked. Cleavage by a furin-like convertase results in production of alpha and beta chains which form a disulfide-linked heterodimer. Interacts with DPP4. Interacts with FGF2. Interacts with WNT5A. Also interacts with WNT3A and WNT7B. Interacts with hedgehog protein SHH; the heparan sulfate chains are not required for the interaction. Also interacts with hedgehog protein IHH. Interacts with CD81. Interacts with Wnt receptors FZD4, FZD7 and FZD8; the heparan sulfate chains are required for the interaction. Post-translationally, O-glycosylated; contains heparan sulfate and/or chondroitin sulfate. Cleaved intracellularly by a furin-like convertase to generate 2 subunits, alpha and beta, which remain associated through disulfide bonds and are associated with the cell surface via the GPI-anchor. This processing is essential for its role in inhibition of hedgehog signaling. A second proteolytic event may result in cleavage of the protein on the cell surface, separating it from the GPI-anchor and leading to its shedding from the cell surface. Detected in placenta (at protein level). Highly expressed in lung, liver and kidney.

The protein resides in the cell membrane. In terms of biological role, cell surface proteoglycan. Negatively regulates the hedgehog signaling pathway when attached via the GPI-anchor to the cell surface by competing with the hedgehog receptor PTC1 for binding to hedgehog proteins. Binding to the hedgehog protein SHH triggers internalization of the complex by endocytosis and its subsequent lysosomal degradation. Positively regulates the canonical Wnt signaling pathway by binding to the Wnt receptor Frizzled and stimulating the binding of the Frizzled receptor to Wnt ligands. Positively regulates the non-canonical Wnt signaling pathway. Binds to CD81 which decreases the availability of free CD81 for binding to the transcriptional repressor HHEX, resulting in nuclear translocation of HHEX and transcriptional repression. Inhibits the dipeptidyl peptidase activity of DPP4. Plays a role in limb patterning and skeletal development by controlling the cellular response to BMP4. Modulates the effects of growth factors BMP2, BMP7 and FGF7 on renal branching morphogenesis. Required for coronary vascular development. Plays a role in regulating cell movements during gastrulation. The sequence is that of Glypican-3 (GPC3) from Homo sapiens (Human).